The sequence spans 372 residues: Alanine dehydrogenase 2 (372 aa).

Residue His95 is part of the active site. NAD(+) is bound at residue 169-199 (KVTIIGGGQAGTNAAKIALGLGADVTILDVN).

This sequence belongs to the AlaDH/PNT family.

The catalysed reaction is L-alanine + NAD(+) + H2O = pyruvate + NH4(+) + NADH + H(+). It participates in amino-acid degradation; L-alanine degradation via dehydrogenase pathway; NH(3) and pyruvate from L-alanine: step 1/1. Its function is as follows. May play a role in cell wall synthesis as L-alanine is an important constituent of the peptidoglycan layer. This chain is Alanine dehydrogenase 2 (ald2), found in Staphylococcus aureus (strain COL).